A 212-amino-acid chain; its full sequence is Large ribosomal subunit protein uL3 (212 aa).

Glutamine 153 is modified (N5-methylglutamine).

Belongs to the universal ribosomal protein uL3 family. Part of the 50S ribosomal subunit. Forms a cluster with proteins L14 and L19. Post-translationally, methylated by PrmB.

Functionally, one of the primary rRNA binding proteins, it binds directly near the 3'-end of the 23S rRNA, where it nucleates assembly of the 50S subunit. The polypeptide is Large ribosomal subunit protein uL3 (Shewanella loihica (strain ATCC BAA-1088 / PV-4)).